Here is a 246-residue protein sequence, read N- to C-terminus: Probable transcriptional regulatory protein SPO1072 (246 aa).

Positions 1–22 (MAGHSKWANIQHRKGRQDAARS) are disordered.

Belongs to the TACO1 family.

The protein resides in the cytoplasm. This chain is Probable transcriptional regulatory protein SPO1072, found in Ruegeria pomeroyi (strain ATCC 700808 / DSM 15171 / DSS-3) (Silicibacter pomeroyi).